A 383-amino-acid chain; its full sequence is Cyclin-D4-2 (383 aa).

A compositionally biased stretch (gly residues) spans 51 to 62; the sequence is AAGGGGGSGGGG. Disordered stretches follow at residues 51 to 70, 313 to 335, and 354 to 383; these read AAGG…EDMF, QPKP…PESP, and ATIA…KLSR. The span at 323-335 shows a compositional bias: low complexity; sequence SASASSSSVPESP.

Belongs to the cyclin family. Cyclin D subfamily.

This is Cyclin-D4-2 (CYCD4-2) from Oryza sativa subsp. japonica (Rice).